Here is a 247-residue protein sequence, read N- to C-terminus: Pyridoxine 5'-phosphate synthase (247 aa).

Asn-12 is a binding site for 3-amino-2-oxopropyl phosphate. Residue 14–15 (DH) coordinates 1-deoxy-D-xylulose 5-phosphate. Arg-23 provides a ligand contact to 3-amino-2-oxopropyl phosphate. Catalysis depends on His-48, which acts as the Proton acceptor. Arg-50 and His-55 together coordinate 1-deoxy-D-xylulose 5-phosphate. Residue Glu-75 is the Proton acceptor of the active site. 1-deoxy-D-xylulose 5-phosphate is bound at residue Thr-105. Residue His-196 is the Proton donor of the active site. 3-amino-2-oxopropyl phosphate-binding positions include Gly-197 and 218–219 (GH).

It belongs to the PNP synthase family. In terms of assembly, homooctamer; tetramer of dimers.

Its subcellular location is the cytoplasm. The enzyme catalyses 3-amino-2-oxopropyl phosphate + 1-deoxy-D-xylulose 5-phosphate = pyridoxine 5'-phosphate + phosphate + 2 H2O + H(+). It functions in the pathway cofactor biosynthesis; pyridoxine 5'-phosphate biosynthesis; pyridoxine 5'-phosphate from D-erythrose 4-phosphate: step 5/5. In terms of biological role, catalyzes the complicated ring closure reaction between the two acyclic compounds 1-deoxy-D-xylulose-5-phosphate (DXP) and 3-amino-2-oxopropyl phosphate (1-amino-acetone-3-phosphate or AAP) to form pyridoxine 5'-phosphate (PNP) and inorganic phosphate. The protein is Pyridoxine 5'-phosphate synthase of Pseudomonas fluorescens (strain SBW25).